Here is a 265-residue protein sequence, read N- to C-terminus: Indole-3-glycerol phosphate synthase (265 aa).

Belongs to the TrpC family.

The enzyme catalyses 1-(2-carboxyphenylamino)-1-deoxy-D-ribulose 5-phosphate + H(+) = (1S,2R)-1-C-(indol-3-yl)glycerol 3-phosphate + CO2 + H2O. It participates in amino-acid biosynthesis; L-tryptophan biosynthesis; L-tryptophan from chorismate: step 4/5. This Desulforamulus reducens (strain ATCC BAA-1160 / DSM 100696 / MI-1) (Desulfotomaculum reducens) protein is Indole-3-glycerol phosphate synthase.